Reading from the N-terminus, the 530-residue chain is GH3 domain-containing protein (530 aa).

An N-terminal signal peptide occupies residues 1 to 17 (MLLWPLLLLLLLLPTLA). Residues 99–122 (LTKASQTQQEDSGEQPLPPTSNQD) form a disordered region. N450 is a glycosylation site (N-linked (GlcNAc...) asparagine). An N5-methylglutamine modification is found at Q489.

It belongs to the GH3 family. In terms of processing, methylated at Gln-489 by N6AMT1.

It localises to the endoplasmic reticulum. It is found in the nucleus envelope. This is GH3 domain-containing protein (GHDC) from Homo sapiens (Human).